Reading from the N-terminus, the 213-residue chain is 5''-phosphoribostamycin phosphatase (213 aa).

Residue H8 is the Tele-phosphohistidine intermediate of the active site. Residue H155 is part of the active site.

This sequence belongs to the histidine phosphatase superfamily.

It carries out the reaction 5''-phosphoribostamycin + H2O = ribostamycin + phosphate. Its pathway is antibiotic biosynthesis; butirosin biosynthesis. In terms of biological role, catalyzes dephosphorylation of 5''-phosphoribostamycin to generate ribostamycinin the biosynthetic pathway of butirosin. This Niallia circulans (Bacillus circulans) protein is 5''-phosphoribostamycin phosphatase (btrP).